The chain runs to 260 residues: Peptidase inhibitor 15-A (260 aa).

Residues 1–21 form the signal peptide; it reads MNENRLAIDILLLCISCGASA. Positions 22-62 are excised as a propeptide; it reads LAGFSPTASSSLPATNLTDIGFAPPKYLTEAANIPKTRRKR. N-linked (GlcNAc...) asparagine glycans are attached at residues asparagine 37 and asparagine 126. The SCP domain occupies 73–213; that stretch reads LDYHNKVRGK…KRATYLVCNY (141 aa).

This sequence belongs to the CRISP family.

The protein localises to the secreted. Serine protease inhibitor which displays weak inhibitory activity against trypsin. May play a role in facial patterning during embryonic development. The sequence is that of Peptidase inhibitor 15-A (pi15a) from Danio rerio (Zebrafish).